Reading from the N-terminus, the 130-residue chain is Small ribosomal subunit protein uS11c (130 aa).

It belongs to the universal ribosomal protein uS11 family. In terms of assembly, part of the 30S ribosomal subunit.

It localises to the plastid. The protein localises to the chloroplast. In Zygnema circumcarinatum (Green alga), this protein is Small ribosomal subunit protein uS11c.